The chain runs to 1311 residues: Zinc finger protein 521 (1311 aa).

A C2H2-type 1; degenerate zinc finger spans residues 47–67 (HSCDSCLQVFESLSDITEHKI). The interval 81 to 108 (DPSCSWPASSPSSKDQTSPSHGEGCDFG) is disordered. Residues 83–102 (SCSWPASSPSSKDQTSPSHG) are compositionally biased toward low complexity. C2H2-type zinc fingers lie at residues 118 to 140 (YPCQ…EQSH), 146 to 168 (FKCT…IKLH), 174 to 196 (YHCS…LKTH), 202 to 224 (YKCA…MQVH), 246 to 269 (QKCS…AECH), 281 to 304 (LQCM…EQVH), and 310 to 332 (NSCS…MDSH). The segment at 357-398 (TTPDSNLSVDSSTMVEAAPPIPKSRGRKRAAQQTSDMTGPSS) is disordered. Polar residues-rich tracts occupy residues 359 to 370 (PDSNLSVDSSTM) and 387 to 398 (AQQTSDMTGPSS). Residues 405-429 (YSCIYCNKQLFSSLAVLQIHLKTMH) form a C2H2-type 9; degenerate zinc finger. C2H2-type zinc fingers lie at residues 437-460 (HICQ…KQVH), 477-500 (YQCN…RCSH), and 513-536 (FFCP…RQVH). Ser-546 is modified (phosphoserine). Residues 560–585 (YSCSYCTNSPIFNSVLKLNKHIKENH) form a C2H2-type 13; atypical zinc finger. A phosphoserine mark is found at Ser-605 and Ser-608. 7 consecutive C2H2-type zinc fingers follow at residues 634–656 (YICN…LKTH), 664–686 (LTCP…VTIH), 694–717 (YICE…LDMH), 722–745 (FRCT…AVKH), 752–775 (YRCT…KHNH), 783–805 (HKCI…ITTH), and 809–832 (YNCR…REKH). The disordered stretch occupies residues 863-883 (TNSQESHNSHDGSEEDVDSSE). Residues 886–908 (YGCDICGAAYTMETLLQNHQLRD) form a C2H2-type 21; degenerate zinc finger. 3 consecutive C2H2-type zinc fingers follow at residues 930 to 952 (YKCN…MQTH), 959 to 981 (YMCP…KVTH), and 1020 to 1042 (FRCV…GTFH). Residues 1065–1083 (YKCASCLKEFRSKQDLVKL) form a C2H2-type 25; degenerate zinc finger. The segment covering 1105–1119 (PGLSLPPGASRPGLG) has biased composition (low complexity). The tract at residues 1105–1136 (PGLSLPPGASRPGLGQNESLSAMEGKGKAGGL) is disordered. 5 consecutive C2H2-type zinc fingers follow at residues 1138–1161 (TRCS…QTVH), 1195–1217 (YQCI…VANH), 1225–1247 (HECK…LIEH), 1256–1279 (FKCP…FSAH), and 1286–1309 (YDCT…MTQH). Lys-1146 participates in a covalent cross-link: Glycyl lysine isopeptide (Lys-Gly) (interchain with G-Cter in SUMO2).

Belongs to the krueppel C2H2-type zinc-finger protein family. In terms of assembly, interacts with EBF1. Interacts with SMAD1 and SMAD4. As to expression, widely expressed. Expressed in all B-cell stages.

Its subcellular location is the nucleus. Transcription factor that can both act as an activator or a repressor depending on the context. Involved in BMP signaling and in the regulation of the immature compartment of the hematopoietic system. Associates with SMADs in response to BMP2 leading to activate transcription of BMP target genes. Acts as a transcriptional repressor via its interaction with EBF1, a transcription factor involved specification of B-cell lineage; this interaction preventing EBF1 to bind DNA and activate target genes. This Mus musculus (Mouse) protein is Zinc finger protein 521 (Znf521).